Consider the following 173-residue polypeptide: UPF0316 protein Amet_0954 (173 aa).

The next 3 membrane-spanning stretches (helical) occupy residues 3–23 (LVLG…MGTV), 38–58 (AIGF…LEAL), and 61–81 (PVNI…GIYI).

This sequence belongs to the UPF0316 family.

It localises to the cell membrane. The chain is UPF0316 protein Amet_0954 from Alkaliphilus metalliredigens (strain QYMF).